A 275-amino-acid polypeptide reads, in one-letter code: Tryptophan synthase alpha chain (275 aa).

Catalysis depends on proton acceptor residues glutamate 51 and glutamate 62.

It belongs to the TrpA family. Tetramer of two alpha and two beta chains.

It catalyses the reaction (1S,2R)-1-C-(indol-3-yl)glycerol 3-phosphate + L-serine = D-glyceraldehyde 3-phosphate + L-tryptophan + H2O. The protein operates within amino-acid biosynthesis; L-tryptophan biosynthesis; L-tryptophan from chorismate: step 5/5. In terms of biological role, the alpha subunit is responsible for the aldol cleavage of indoleglycerol phosphate to indole and glyceraldehyde 3-phosphate. This is Tryptophan synthase alpha chain from Caulobacter sp. (strain K31).